A 202-amino-acid polypeptide reads, in one-letter code: uncharacterized protein (202 aa).

An Isoglutamyl lysine isopeptide (Lys-Gln) (interchain with Q-Cter in protein Pup) cross-link involves residue Lys136.

This is an uncharacterized protein from Mycobacterium tuberculosis (strain CDC 1551 / Oshkosh).